Here is a 147-residue protein sequence, read N- to C-terminus: Putative HTH-type transcriptional regulator slr0846 (147 aa).

The HTH rrf2-type domain occupies 2 to 130 (KLTTKSHYSV…YSITLADLYY (129 aa)).

This is Putative HTH-type transcriptional regulator slr0846 from Synechocystis sp. (strain ATCC 27184 / PCC 6803 / Kazusa).